The primary structure comprises 245 residues: MKVTVVYYPGDPAAKGAAEALEREYGIKALELPEDPPFFDFNSLAGDAFIVLSRHSSEKRVKAFTVHHTGNFGEAKLGGEPKRLGVAYPSLACSLLRAMNAFRREGYDVTYEATHHGPTSDKPLVFAEIGSVKEDWEDPANHEVLAKAVASWEEHRCEAPKAVWVGGPHYSKRATKRCLEGEACFGHIAPKYALDHLDEDLLRQMVERSFERPERAYVEKKSLKSELRLRVVKALEDLGLEVLVV.

Belongs to the DtdA deacylase family. Monomer. Zn(2+) is required as a cofactor.

The catalysed reaction is a D-aminoacyl-tRNA + H2O = a tRNA + a D-alpha-amino acid + H(+). It catalyses the reaction glycyl-tRNA(Ala) + H2O = tRNA(Ala) + glycine + H(+). Its function is as follows. D-aminoacyl-tRNA deacylase with broad substrate specificity. By recycling D-aminoacyl-tRNA to D-amino acids and free tRNA molecules, this enzyme counteracts the toxicity associated with the formation of D-aminoacyl-tRNA entities in vivo. This chain is D-aminoacyl-tRNA deacylase, found in Ignicoccus hospitalis (strain KIN4/I / DSM 18386 / JCM 14125).